Here is a 553-residue protein sequence, read N- to C-terminus: Rhodopsin kinase GRK7 (553 aa).

Position 36 is a phosphoserine; by PKA (Ser36). The region spanning 56–176 (FNSLCEQQPI…LVSPFYDKFL (121 aa)) is the RGS domain. The Protein kinase domain maps to 191–454 (FEEFRVLGKG…SDDPRKHHFF (264 aa)). Residues 197–205 (LGKGGFGEV) and Lys220 contribute to the ATP site. Asp316 functions as the Proton acceptor in the catalytic mechanism. Residues 455 to 520 (KTINFPRLEA…GAVPIAWQEE (66 aa)) form the AGC-kinase C-terminal domain. At Cys550 the chain carries Cysteine methyl ester. Residue Cys550 is the site of S-geranylgeranyl cysteine attachment. A propeptide spans 551–553 (LLL) (removed in mature form).

This sequence belongs to the protein kinase superfamily. AGC Ser/Thr protein kinase family. GPRK subfamily. As to quaternary structure, interacts (when prenylated) with PDE6D; this promotes release from membranes. Autophosphorylated in vitro at Ser-490. Phosphorylation at Ser-36 is regulated by light and activated by cAMP.

The protein resides in the membrane. The enzyme catalyses L-threonyl-[rhodopsin] + ATP = O-phospho-L-threonyl-[rhodopsin] + ADP + H(+). The catalysed reaction is L-seryl-[rhodopsin] + ATP = O-phospho-L-seryl-[rhodopsin] + ADP + H(+). Its activity is regulated as follows. Inhibited by phosphorylation of Ser-36. In terms of biological role, retina-specific kinase involved in the shutoff of the photoresponse and adaptation to changing light conditions via cone opsin phosphorylation, including rhodopsin (RHO). The polypeptide is Rhodopsin kinase GRK7 (GRK7) (Sus scrofa (Pig)).